Reading from the N-terminus, the 229-residue chain is Cytidylate kinase (229 aa).

12-20 provides a ligand contact to ATP; the sequence is GPSGAGKGT.

The protein belongs to the cytidylate kinase family. Type 1 subfamily.

The protein resides in the cytoplasm. The catalysed reaction is CMP + ATP = CDP + ADP. It catalyses the reaction dCMP + ATP = dCDP + ADP. This Pseudomonas aeruginosa (strain UCBPP-PA14) protein is Cytidylate kinase.